An 857-amino-acid chain; its full sequence is Thiamine repressible genes regulatory protein thi5 (857 aa).

The segment at residues 38–64 (CLSCRAKKIRCSGSEPCQACIATPSQC) is a DNA-binding region (zn(2)-C6 fungal-type). Disordered regions lie at residues 152 to 175 (AVKS…NFSS) and 797 to 819 (GHAL…HPSQ). Over residues 159–175 (SFPSSSTPPSSDSNFSS) the composition is skewed to low complexity. Residues 803-819 (PESNNSSNSFKPSHPSQ) are compositionally biased toward polar residues.

The protein localises to the nucleus. Functionally, transcription factor that activates the nmt1 promoter. Regulation of thiamine repressible genes. Negatively regulates conjugation during meiosis, by inducing negative regulators which delay conjugation. Involved in thi1 regulation. The polypeptide is Thiamine repressible genes regulatory protein thi5 (thi5) (Schizosaccharomyces pombe (strain 972 / ATCC 24843) (Fission yeast)).